The chain runs to 729 residues: Fatty acid oxidation complex subunit alpha (729 aa).

The segment at 1–189 (MLYKGDTLYV…KIGLIDGIVK (189 aa)) is enoyl-CoA hydratase/isomerase. A substrate-binding site is contributed by Asp-296. The tract at residues 311-729 (EMPKQAAVLG…ARPVGALKTA (419 aa)) is 3-hydroxyacyl-CoA dehydrogenase. Residues Met-324, Asp-343, 400–402 (VVE), Lys-407, and Ser-429 contribute to the NAD(+) site. The active-site For 3-hydroxyacyl-CoA dehydrogenase activity is the His-450. Asn-453 serves as a coordination point for NAD(+). Positions 500 and 660 each coordinate substrate. Positions 708–729 (RHNEPYYPPVEPARPVGALKTA) are disordered.

It in the N-terminal section; belongs to the enoyl-CoA hydratase/isomerase family. In the C-terminal section; belongs to the 3-hydroxyacyl-CoA dehydrogenase family. As to quaternary structure, heterotetramer of two alpha chains (FadB) and two beta chains (FadA).

The catalysed reaction is a (3S)-3-hydroxyacyl-CoA + NAD(+) = a 3-oxoacyl-CoA + NADH + H(+). The enzyme catalyses a (3S)-3-hydroxyacyl-CoA = a (2E)-enoyl-CoA + H2O. It catalyses the reaction a 4-saturated-(3S)-3-hydroxyacyl-CoA = a (3E)-enoyl-CoA + H2O. It carries out the reaction (3S)-3-hydroxybutanoyl-CoA = (3R)-3-hydroxybutanoyl-CoA. The catalysed reaction is a (3Z)-enoyl-CoA = a 4-saturated (2E)-enoyl-CoA. The enzyme catalyses a (3E)-enoyl-CoA = a 4-saturated (2E)-enoyl-CoA. It functions in the pathway lipid metabolism; fatty acid beta-oxidation. Its function is as follows. Involved in the aerobic and anaerobic degradation of long-chain fatty acids via beta-oxidation cycle. Catalyzes the formation of 3-oxoacyl-CoA from enoyl-CoA via L-3-hydroxyacyl-CoA. It can also use D-3-hydroxyacyl-CoA and cis-3-enoyl-CoA as substrate. The chain is Fatty acid oxidation complex subunit alpha from Enterobacter sp. (strain 638).